Consider the following 254-residue polypeptide: Hydroxyacylglutathione hydrolase (254 aa).

7 residues coordinate Zn(2+): H53, H55, D57, H58, H111, D128, and H166.

Belongs to the metallo-beta-lactamase superfamily. Glyoxalase II family. In terms of assembly, monomer. Zn(2+) serves as cofactor.

The enzyme catalyses an S-(2-hydroxyacyl)glutathione + H2O = a 2-hydroxy carboxylate + glutathione + H(+). It functions in the pathway secondary metabolite metabolism; methylglyoxal degradation; (R)-lactate from methylglyoxal: step 2/2. Thiolesterase that catalyzes the hydrolysis of S-D-lactoyl-glutathione to form glutathione and D-lactic acid. In Aeromonas hydrophila subsp. hydrophila (strain ATCC 7966 / DSM 30187 / BCRC 13018 / CCUG 14551 / JCM 1027 / KCTC 2358 / NCIMB 9240 / NCTC 8049), this protein is Hydroxyacylglutathione hydrolase.